A 117-amino-acid polypeptide reads, in one-letter code: Large ribosomal subunit protein bL19 (117 aa).

The protein belongs to the bacterial ribosomal protein bL19 family.

Its function is as follows. This protein is located at the 30S-50S ribosomal subunit interface and may play a role in the structure and function of the aminoacyl-tRNA binding site. This is Large ribosomal subunit protein bL19 from Bacteroides thetaiotaomicron (strain ATCC 29148 / DSM 2079 / JCM 5827 / CCUG 10774 / NCTC 10582 / VPI-5482 / E50).